A 324-amino-acid chain; its full sequence is MNVAPEPGAAGAAAPQGRKLLRLEVRNAQTPIERKPPWIRTRARMGPEYTELKNLVRREGLHTVCEEAGCPNIFECWEDREATFLIGGDQCTRRCDFCQIDTGKPAPLDRDEPRRVAESVHTMGLRYATVTGVARDDLPDGGAWLYAETVRAIKELNPSTGVELLIPDFNGKADQLGEVFEARPEVLAHNVETVPRVFKRIRPAFTYQRSLDVLTAARQFGLVTKSNLILGMGETPEEVRTALVDLHDAGCDIITITQYLRPSPRHHPVERWVRPEEFVEFAQYAEGLGFAGVLAGPLVRSSYRAGRLYEQARSRNTSGASNSG.

[4Fe-4S] cluster-binding residues include Cys-65, Cys-70, Cys-76, Cys-91, Cys-95, Cys-98, and Ser-302. Residues Trp-77 to Ala-291 enclose the Radical SAM core domain.

It belongs to the radical SAM superfamily. Lipoyl synthase family. Requires [4Fe-4S] cluster as cofactor.

The protein resides in the cytoplasm. The catalysed reaction is [[Fe-S] cluster scaffold protein carrying a second [4Fe-4S](2+) cluster] + N(6)-octanoyl-L-lysyl-[protein] + 2 oxidized [2Fe-2S]-[ferredoxin] + 2 S-adenosyl-L-methionine + 4 H(+) = [[Fe-S] cluster scaffold protein] + N(6)-[(R)-dihydrolipoyl]-L-lysyl-[protein] + 4 Fe(3+) + 2 hydrogen sulfide + 2 5'-deoxyadenosine + 2 L-methionine + 2 reduced [2Fe-2S]-[ferredoxin]. It functions in the pathway protein modification; protein lipoylation via endogenous pathway; protein N(6)-(lipoyl)lysine from octanoyl-[acyl-carrier-protein]: step 2/2. Its function is as follows. Catalyzes the radical-mediated insertion of two sulfur atoms into the C-6 and C-8 positions of the octanoyl moiety bound to the lipoyl domains of lipoate-dependent enzymes, thereby converting the octanoylated domains into lipoylated derivatives. In Mycobacterium ulcerans (strain Agy99), this protein is Lipoyl synthase.